The chain runs to 376 residues: UPF0754 membrane protein SE_1527 (376 aa).

2 helical membrane-spanning segments follow: residues 4–24 (ILLV…TNMI) and 356–376 (TLGF…AIFV).

It belongs to the UPF0754 family.

It localises to the cell membrane. This is UPF0754 membrane protein SE_1527 from Staphylococcus epidermidis (strain ATCC 12228 / FDA PCI 1200).